The following is a 321-amino-acid chain: 4-dihydromethyl-trisporate dehydrogenase (321 aa).

Y51 functions as the Proton donor in the catalytic mechanism. H113 lines the substrate pocket.

This sequence belongs to the aldo/keto reductase family.

It participates in pheromone biosynthesis; trisporate biosynthesis. Functionally, catalyzes the NADP-dependent oxidation of (+) mating-type specific precursor 4-dihydromethyl-trisporate to methyl-trisporate. The polypeptide is 4-dihydromethyl-trisporate dehydrogenase (tdh) (Mucor mucedo (Common pinmould)).